Consider the following 442-residue polypeptide: MALTFQEILDRIRIIDRDVTELNRLKSRLPADRPYSSSLQISFDKQINELLNERVGLMELEVLDPPSWILGVPTTGISQETPVPLKGLFPSGDLSKEKPDDQDVINFLRELPKTEIHLHLEACVNKDTMKRLMAKNGINVTDEEFEAKFNFKDLNSFIQVFFFIQSLVKEPSDFSFFIESLAEYMRANNILYTEVFFAPSKFIQNGLDFEEMIDFLVNRIREEKENDGIVIRLLVDVSRSFGPENAMKNLDRVLKLRHPEVIGIGLGGAELMGPARDYQGVFQKAREAGLRVVAHSGEDDGPWAIWEAVELLKAERIGHGTSAIQDPELVKYLRENHIPIEICVTSNVFTGKYVRKEQNHPVRYYYDQGLPLSINTDDPEIFNVNLTYEYYKLWRFLDFSLDEIVDLIRQGVFASFHPNKESLWAEMEKNIHLVKTRYGLKR.

It belongs to the metallo-dependent hydrolases superfamily. Adenosine and AMP deaminases family. It depends on Zn(2+) as a cofactor.

The catalysed reaction is 3',5'-cyclic AMP + H2O + H(+) = 3',5'-cyclic IMP + NH4(+). Deaminates cAMP into cIMP, thereby repressing cAMP dependent metabolism or genes. The chain is Cyclic adenylate deaminase (add) from Leptospira interrogans serogroup Icterohaemorrhagiae serovar copenhageni (strain Fiocruz L1-130).